Consider the following 688-residue polypeptide: Acyl-CoA synthetase short-chain family member B, mitochondrial (688 aa).

The protein belongs to the ATP-dependent AMP-binding enzyme family.

It localises to the mitochondrion. The catalysed reaction is acetate + ATP + CoA = acetyl-CoA + AMP + diphosphate. In terms of biological role, activates acetate so that it can be used for lipid synthesis or for energy generation. The chain is Acyl-CoA synthetase short-chain family member B, mitochondrial (aslB) from Dictyostelium discoideum (Social amoeba).